Here is a 290-residue protein sequence, read N- to C-terminus: AA9 family lytic polysaccharide monooxygenase A (290 aa).

The signal sequence occupies residues 1-17 (MKLSLLASVALVPFVSA). Residues H18 and H101 each coordinate Cu(2+). C67 and C189 are joined by a disulfide. H176 contacts O2. A Cu(2+)-binding site is contributed by Y187. 2 N-linked (GlcNAc...) asparagine glycosylation sites follow: N220 and N254. Positions 240–290 (GGSGSGSSSYSKVANVTSSDESSQSGASSSQGTVSTCPNKYNRRHARQFKP) are disordered. Residues 245–275 (GSSSYSKVANVTSSDESSQSGASSSQGTVST) show a composition bias toward low complexity. The span at 280–290 (YNRRHARQFKP) shows a compositional bias: basic residues.

It belongs to the polysaccharide monooxygenase AA9 family. Cu(2+) serves as cofactor.

The protein resides in the secreted. The enzyme catalyses [(1-&gt;4)-beta-D-glucosyl]n+m + reduced acceptor + O2 = 4-dehydro-beta-D-glucosyl-[(1-&gt;4)-beta-D-glucosyl]n-1 + [(1-&gt;4)-beta-D-glucosyl]m + acceptor + H2O.. Functionally, lytic polysaccharide monooxygenase (LPMO) that depolymerizes crystalline and amorphous polysaccharides via the oxidation of scissile alpha- or beta-(1-4)-glycosidic bonds, yielding exclusively C1 oxidation products. Catalysis by LPMOs requires the reduction of the active-site copper from Cu(II) to Cu(I) by a reducing agent and H(2)O(2) or O(2) as a cosubstrate. This Aspergillus fumigatus (strain ATCC MYA-4609 / CBS 101355 / FGSC A1100 / Af293) (Neosartorya fumigata) protein is AA9 family lytic polysaccharide monooxygenase A.